We begin with the raw amino-acid sequence, 239 residues long: Transcriptional regulatory protein DcuR (239 aa).

The region spanning asparagine 3–arginine 121 is the Response regulatory domain. A 4-aspartylphosphate modification is found at aspartate 56. Positions threonine 181–isoleucine 200 form a DNA-binding region, H-T-H motif.

In terms of processing, phosphorylated and activated by DcuS.

The protein localises to the cytoplasm. In terms of biological role, member of the two-component regulatory system DcuR/DcuS. Involved in the C4-dicarboxylate-stimulated regulation of the genes encoding the anaerobic fumarate respiratory system (frdABCD; nuoAN; dcuB; dcuC; sdhCDAB; etc.). Weakly regulates the aerobic C4-dicarboxylate transporter dctA. The protein is Transcriptional regulatory protein DcuR (dcuR) of Escherichia coli O6:H1 (strain CFT073 / ATCC 700928 / UPEC).